The primary structure comprises 206 residues: Protein GrpE (206 aa).

It belongs to the GrpE family. Homodimer.

It localises to the cytoplasm. Its function is as follows. Participates actively in the response to hyperosmotic and heat shock by preventing the aggregation of stress-denatured proteins, in association with DnaK and GrpE. It is the nucleotide exchange factor for DnaK and may function as a thermosensor. Unfolded proteins bind initially to DnaJ; upon interaction with the DnaJ-bound protein, DnaK hydrolyzes its bound ATP, resulting in the formation of a stable complex. GrpE releases ADP from DnaK; ATP binding to DnaK triggers the release of the substrate protein, thus completing the reaction cycle. Several rounds of ATP-dependent interactions between DnaJ, DnaK and GrpE are required for fully efficient folding. This Psychromonas ingrahamii (strain DSM 17664 / CCUG 51855 / 37) protein is Protein GrpE.